Reading from the N-terminus, the 337-residue chain is Probable RuBisCO transcriptional regulator (337 aa).

The region spanning 6–63 (FTLDQLRILKAIAVEGSFKRAADSLYVSQPAVSLQVQNLERQLDVPLFDRGGRRAQLT) is the HTH lysR-type domain. Residues 23 to 42 (FKRAADSLYVSQPAVSLQVQ) constitute a DNA-binding region (H-T-H motif).

Belongs to the LysR transcriptional regulatory family.

Trans-acting transcriptional regulator of RuBisCO genes (rbcL and rbcS) expression. This Trichormus variabilis (strain ATCC 29413 / PCC 7937) (Anabaena variabilis) protein is Probable RuBisCO transcriptional regulator (rbcR).